The chain runs to 591 residues: MSWLFGIKGPKGEGTGPPLPLPPAQPGAEGGGDRGAGDRPSPKDKWSNFDPTGLERAAKAARELEHSRHAKEALSLAQMQEQTLQLEQQSKLKEYEAAVEQLKSEQIRVQAEERRKTLTEETRQHQARAQYQDKLARQRYEDQLKQQQLLNEENLRKQEESVQKQEAIRRATVEREMELRHKNEMLRVEAEARARAKADRENADIIREQIRLKAAEHRQTILESIRTAGTLLGEGFRAFVTDWDKVTATVAGLTLLAVGVYSAKNATSVAGRYIEARLGKPSLVRETSRISVLEALRHPIQVSRRLVSRPQDALEGVILSPSLEARVRDIAIATRNTKKNKSLYRNVLMYGPPGTGKTLFAKKLALHSGMDYAIMTGGDVAPMGREGVTAMHKVFDWASTSRRGLLLFVDEADAFLRKRATEKISEDLRATLNAFLHRTGQHSSKFMLVLASNQPEQFDWAINDRIDEMVCFALPQREERERLVRMYFDKYVLKPATEGKQRLKVAQFDYGKKCSEVAQLTEGMSGREIAQLAVAWQAMAYSSEDGVLTEAMMDARVQDAVQQHQQKMQWLKVERPDSQTNKPPHPSLLSC.

The disordered stretch occupies residues 1–52; the sequence is MSWLFGIKGPKGEGTGPPLPLPPAQPGAEGGGDRGAGDRPSPKDKWSNFDPT. Position 2 is an N-acetylserine (serine 2). Positions 2–49 are required for interaction with the inner surface of the mitochondrial outer membrane; that stretch reads SWLFGIKGPKGEGTGPPLPLPPAQPGAEGGGDRGAGDRPSPKDKWSNF. Residues 2–245 lie on the Mitochondrial intermembrane side of the membrane; that stretch reads SWLFGIKGPK…FRAFVTDWDK (244 aa). Basic and acidic residues predominate over residues 31–47; it reads GGDRGAGDRPSPKDKWS. Residues 55-216 are a coiled coil; that stretch reads ERAAKAAREL…REQIRLKAAE (162 aa). A helical transmembrane segment spans residues 246-263; the sequence is VTATVAGLTLLAVGVYSA. The Mitochondrial matrix segment spans residues 264-586; the sequence is KNATSVAGRY…DSQTNKPPHP (323 aa). An S100B-binding region spans residues 289-304; the sequence is RISVLEALRHPIQVSR. 351-358 contacts ATP; it reads GPPGTGKT. The residue at position 490 (lysine 490) is an N6-acetyllysine; alternate. Position 490 is an N6-succinyllysine; alternate (lysine 490). 2 positions are modified to N6-acetyllysine: lysine 494 and lysine 512. A disordered region spans residues 572 to 591; the sequence is KVERPDSQTNKPPHPSLLSC.

The protein belongs to the AAA ATPase family. As to quaternary structure, can form homooligomers. Homodimer formation at the N-terminus may be regulated by ATP and is required for the interaction with the inner surface of the mitochondrial outer membrane and correct mitochondrial homeostasis. Interacts with components of the mitochondrial ribosome and with other proteins involved in mitochondrial RNA metabolism. May also interact with protein involved in lipid metabolism, including STARD9. May interact with FAM210A. Interacts with GADD45GIP1. Interacts with S100B in a Ca(+2)- and Zn(+2)-dependent manner; this interaction probably occurs in the cytosol prior to mitochondrial targeting. S100B could assist ATAD3A cytoplasmic processing, preventing aggregation and favoring mitochondrial localization. Interacts with HSP60/HSPD1. Interacts with CLPB. Interacts with EIF2AK3/PERK; ATAD3A and EIF2S1/eIF-2-alpha occupy a common binding site within the cytoplasmic loop of EIF2AK3/PERK, leading to prevent EIF2AK3/PERK association with its substrate EIF2S1/eIF-2-alpha. In terms of tissue distribution, expressed in heart, spleen, kidney, liver and at smaller levels, in lung and muscle (at protein level).

The protein resides in the mitochondrion inner membrane. It localises to the mitochondrion matrix. The protein localises to the mitochondrion nucleoid. The catalysed reaction is ATP + H2O = ADP + phosphate + H(+). Its function is as follows. Essential for mitochondrial network organization, mitochondrial metabolism and cell growth at organism and cellular level. May play an important role in mitochondrial protein synthesis. May also participate in mitochondrial DNA replication. May bind to mitochondrial DNA D-loops and contribute to nucleoid stability. Required for enhanced channeling of cholesterol for hormone-dependent steroidogenesis. Involved in mitochondrial-mediated antiviral innate immunity. Required to protect mitochondria from the PERK-mediated unfolded protein response: specifically inhibits the activity of EIF2AK3/PERK at mitochondria-endoplasmic reticulum contact sites, thereby providing a safe haven for mitochondrial protein translation during endoplasmic reticulum stress. Ability to inhibit EIF2AK3/PERK is independent of its ATPase activity. Also involved in the mitochondrial DNA damage response by promoting signaling between damaged genomes and the mitochondrial membrane, leading to activation of the integrated stress response (ISR). The sequence is that of ATPase family AAA domain-containing protein 3A (Atad3a) from Mus musculus (Mouse).